A 383-amino-acid polypeptide reads, in one-letter code: tRNA-specific 2-thiouridylase MnmA (383 aa).

ATP-binding positions include 29–36 and M55; that span reads GMSGGVDS. The interval 115 to 117 is interaction with target base in tRNA; it reads NPD. The Nucleophile role is filled by C120. A disulfide bridge links C120 with C217. An ATP-binding site is contributed by G145. Positions 167–169 are interaction with tRNA; sequence KDQ. The active-site Cysteine persulfide intermediate is the C217. Residues 329 to 330 are interaction with tRNA; that stretch reads RY.

It belongs to the MnmA/TRMU family.

It localises to the cytoplasm. The enzyme catalyses S-sulfanyl-L-cysteinyl-[protein] + uridine(34) in tRNA + AH2 + ATP = 2-thiouridine(34) in tRNA + L-cysteinyl-[protein] + A + AMP + diphosphate + H(+). In terms of biological role, catalyzes the 2-thiolation of uridine at the wobble position (U34) of tRNA, leading to the formation of s(2)U34. This chain is tRNA-specific 2-thiouridylase MnmA, found in Pasteurella multocida (strain Pm70).